Consider the following 96-residue polypeptide: uncharacterized protein (96 aa).

The first 23 residues, 1-23 (MKQFYSVVLTIIIYISSQSNVVS), serve as a signal peptide directing secretion. Disulfide bonds link cysteine 60–cysteine 74, cysteine 67–cysteine 78, and cysteine 73–cysteine 83.

Its subcellular location is the secreted. This is an uncharacterized protein from Schistosoma japonicum (Blood fluke).